Reading from the N-terminus, the 539-residue chain is Chaperonin GroEL (539 aa).

ATP-binding positions include 30-33 (TLGP), Lys51, 87-91 (DGTTT), Gly415, 479-481 (NAA), and Asp495.

It belongs to the chaperonin (HSP60) family. Forms a cylinder of 14 subunits composed of two heptameric rings stacked back-to-back. Interacts with the co-chaperonin GroES.

It is found in the cytoplasm. The enzyme catalyses ATP + H2O + a folded polypeptide = ADP + phosphate + an unfolded polypeptide.. In terms of biological role, together with its co-chaperonin GroES, plays an essential role in assisting protein folding. The GroEL-GroES system forms a nano-cage that allows encapsulation of the non-native substrate proteins and provides a physical environment optimized to promote and accelerate protein folding. The protein is Chaperonin GroEL of Kluyvera intermedia (Enterobacter intermedius).